A 508-amino-acid polypeptide reads, in one-letter code: Bifunctional NAD(P)H-hydrate repair enzyme Nnr (508 aa).

Residues 1–224 (MSGLCACTLV…QVRSVLGEDH (224 aa)) are NAD(P)H-hydrate epimerase. The 203-residue stretch at 15-217 (VQQLEAALFA…EIGFSEAQVR (203 aa)) folds into the YjeF N-terminal domain. Positions 64–68 (HNGGD) are NADPHX 1; for epimerase activity. The K(+) site is built by Asn-65 and Asp-126. An NADPHX 1; for epimerase activity region spans residues 130 to 136 (GFGLERP). Residues Tyr-141 and Asp-159 each contribute to the (6S)-NADPHX site. Ser-162 contacts K(+). Positions 232 to 506 (PDAARAGLPL…LGLLPFLAAD (275 aa)) constitute a YjeF C-terminal domain. Positions 232–508 (PDAARAGLPL…LLPFLAADGP (277 aa)) are ADP-dependent (S)-NAD(P)H-hydrate dehydratase. Gly-334 serves as a coordination point for (6S)-NADPHX. The segment at 383 to 389 (HPGEFKR) is NADPHX 2; for dehydratase activity. ADP contacts are provided by residues 417–421 (KGART) and 437–446 (SPALARGGSG). Asp-447 is a (6S)-NADPHX binding site.

In the N-terminal section; belongs to the NnrE/AIBP family. It in the C-terminal section; belongs to the NnrD/CARKD family. It depends on K(+) as a cofactor.

The enzyme catalyses (6S)-NADHX + ADP = AMP + phosphate + NADH + H(+). The catalysed reaction is (6S)-NADPHX + ADP = AMP + phosphate + NADPH + H(+). It catalyses the reaction (6R)-NADHX = (6S)-NADHX. It carries out the reaction (6R)-NADPHX = (6S)-NADPHX. Its function is as follows. Bifunctional enzyme that catalyzes the epimerization of the S- and R-forms of NAD(P)HX and the dehydration of the S-form of NAD(P)HX at the expense of ADP, which is converted to AMP. This allows the repair of both epimers of NAD(P)HX, a damaged form of NAD(P)H that is a result of enzymatic or heat-dependent hydration. The protein is Bifunctional NAD(P)H-hydrate repair enzyme Nnr (nnr) of Gloeobacter violaceus (strain ATCC 29082 / PCC 7421).